The following is a 378-amino-acid chain: uncharacterized protein (378 aa).

Zn(2+) is bound by residues Cys38, His60, Cys90, Cys93, Cys96, and Cys104.

Belongs to the zinc-containing alcohol dehydrogenase family. Class-III subfamily. Zn(2+) serves as cofactor.

This is an uncharacterized protein from Bacillus subtilis (strain 168).